The following is a 208-amino-acid chain: ATP synthase subunit b (208 aa).

An N-terminal signal peptide occupies residues 1–27 (MVKAKKLVFKWSLLVFSFFTLSLFLVS). Cys28 carries the N-palmitoyl cysteine lipid modification. The S-diacylglycerol cysteine moiety is linked to residue Cys28. The helical transmembrane segment at 49–69 (WVFITHLLAFFILLTLMIFLF) threads the bilayer.

This sequence belongs to the ATPase B chain family. As to quaternary structure, F-type ATPases have 2 components, F(1) - the catalytic core - and F(0) - the membrane proton channel. F(1) has five subunits: alpha(3), beta(3), gamma(1), delta(1), epsilon(1). F(0) has three main subunits: a(1), b(2) and c(10-14). The alpha and beta chains form an alternating ring which encloses part of the gamma chain. F(1) is attached to F(0) by a central stalk formed by the gamma and epsilon chains, while a peripheral stalk is formed by the delta and b chains.

The protein resides in the cell membrane. Its function is as follows. F(1)F(0) ATP synthase produces ATP from ADP in the presence of a proton or sodium gradient. F-type ATPases consist of two structural domains, F(1) containing the extramembraneous catalytic core and F(0) containing the membrane proton channel, linked together by a central stalk and a peripheral stalk. During catalysis, ATP synthesis in the catalytic domain of F(1) is coupled via a rotary mechanism of the central stalk subunits to proton translocation. Component of the F(0) channel, it forms part of the peripheral stalk, linking F(1) to F(0). The polypeptide is ATP synthase subunit b (Mycoplasma genitalium (strain ATCC 33530 / DSM 19775 / NCTC 10195 / G37) (Mycoplasmoides genitalium)).